The chain runs to 451 residues: Vacuolar cation/proton exchanger 1a (451 aa).

Topologically, residues 1-58 (MEAAAAMEAGRKLAARHPHGRSRTAHNMSSSSLRKKSDAALVRKVPVAPLRPLLANLQ) are cytoplasmic. The tract at residues 9–37 (AGRKLAARHPHGRSRTAHNMSSSSLRKKS) is disordered. Residues 13–24 (LAARHPHGRSRT) show a composition bias toward basic residues. A helical transmembrane segment spans residues 59-79 (EVFLATKLAVLFPAVPLAIAA). The Vacuolar portion of the chain corresponds to 80-86 (QCFRFDQ). A helical transmembrane segment spans residues 87-107 (VWVFALSLLGLIPLAERVSFL). Residues 108 to 120 (TEQIALYTGPTVG) lie on the Cytoplasmic side of the membrane. The helical transmembrane segment at 121-141 (GLLNATCGNATELIIALFALL) threads the bilayer. A cation selection region spans residues 128 to 163 (GNATELIIALFALLKGKIEVVKCSLLGSVLSNLLLV). Residues 142–153 (KGKIEVVKCSLL) are Vacuolar-facing. Residues 154–174 (GSVLSNLLLVLGTSLFCGGVV) form a helical membrane-spanning segment. Over 175–191 (NLGARQPYDRNQSDVST) the chain is Cytoplasmic. The chain crosses the membrane as a helical span at residues 192-212 (ALLFLAVLCHSAPLLLRYAVA). Residues 213 to 228 (AGEHSVSATSAAASLD) are Vacuolar-facing. A helical membrane pass occupies residues 229–249 (LSRACSFVMLASYVAYLFFQL). The Cytoplasmic portion of the chain corresponds to 250 to 273 (KTHRQLFEPQEVDGGDAGDDDEEP). A helical membrane pass occupies residues 274-294 (ALGFASALFWLALMTAVISVL). Over 295-317 (SEYVVGTIEPTSQSWGLSVSFIS) the chain is Vacuolar. Residues 318-338 (IILLPIVGNAAEHAGAIIFAL) form a helical membrane-spanning segment. Positions 325–360 (GNAAEHAGAIIFALKNKLDITLGVALGSATQISMFV) are cation selection. At 339–352 (KNKLDITLGVALGS) the chain is on the cytoplasmic side. The chain crosses the membrane as a helical span at residues 353 to 373 (ATQISMFVVPLSVLVAWIMGV). The Vacuolar segment spans residues 374 to 378 (QMDLD). The chain crosses the membrane as a helical span at residues 379 to 399 (FKLLETGSLFMAVLVTAFTLQ). The Cytoplasmic portion of the chain corresponds to 400-404 (DGTSH). Residues 405 to 425 (YLKGILLLLCYIVIGACFFVA) form a helical membrane-spanning segment. Residues 426–451 (RQPAGHANSNGALLDVPTGSMSVQAA) lie on the Vacuolar side of the membrane.

This sequence belongs to the Ca(2+):cation antiporter (CaCA) (TC 2.A.19) family. Cation/proton exchanger (CAX) subfamily. In terms of tissue distribution, ubiquitous.

The protein localises to the vacuole membrane. Functionally, vacuolar cation/proton exchanger (CAX). Translocates Ca(2+) and other metal ions into vacuoles using the proton gradient formed by H(+)-ATPase and H(+)-pyrophosphatase. The protein is Vacuolar cation/proton exchanger 1a (CAX1a) of Oryza sativa subsp. japonica (Rice).